Reading from the N-terminus, the 392-residue chain is Probable glucan endo-1,6-beta-glucosidase B (392 aa).

The signal sequence occupies residues 1–18 (MKVTRLAVLNTLATLTVA). The N-linked (GlcNAc...) asparagine glycan is linked to asparagine 31. Catalysis depends on glutamate 220, which acts as the Proton donor. The active-site Nucleophile is glutamate 322.

The protein belongs to the glycosyl hydrolase 5 (cellulase A) family.

The protein resides in the secreted. The enzyme catalyses Random hydrolysis of (1-&gt;6)-linkages in (1-&gt;6)-beta-D-glucans.. Beta-glucanases participate in the metabolism of beta-glucan, the main structural component of the cell wall. Acts on lutean, pustulan and 1,6-oligo-beta-D-glucosides. The chain is Probable glucan endo-1,6-beta-glucosidase B (exgB) from Aspergillus flavus (strain ATCC 200026 / FGSC A1120 / IAM 13836 / NRRL 3357 / JCM 12722 / SRRC 167).